Consider the following 145-residue polypeptide: MIALIQRVSRASVTVEDEVTGEIGPGLLVLLGVEKDDDEQKANRLCERVLGYRIFSDAEGKMNLNVQQAGGSVLVVSQFTLAADTERGMRPSFSKGAAPDRAEALYEYFVARCRQQEMNTQTGRFAADMQVSLVNDGPVTFWLQV.

A Gly-cisPro motif, important for rejection of L-amino acids motif is present at residues 137-138; that stretch reads GP.

It belongs to the DTD family. Homodimer.

The protein localises to the cytoplasm. It catalyses the reaction glycyl-tRNA(Ala) + H2O = tRNA(Ala) + glycine + H(+). The catalysed reaction is a D-aminoacyl-tRNA + H2O = a tRNA + a D-alpha-amino acid + H(+). Functionally, an aminoacyl-tRNA editing enzyme that deacylates mischarged D-aminoacyl-tRNAs. Also deacylates mischarged glycyl-tRNA(Ala), protecting cells against glycine mischarging by AlaRS. Acts via tRNA-based rather than protein-based catalysis; rejects L-amino acids rather than detecting D-amino acids in the active site. By recycling D-aminoacyl-tRNA to D-amino acids and free tRNA molecules, this enzyme counteracts the toxicity associated with the formation of D-aminoacyl-tRNA entities in vivo and helps enforce protein L-homochirality. This Klebsiella pneumoniae (strain 342) protein is D-aminoacyl-tRNA deacylase.